The sequence spans 1930 residues: Myosin-16 (1930 aa).

In terms of domain architecture, Myosin N-terminal SH3-like spans 35–84 (DIKKSCWVKDEKEGFIAGEIQSEQGDQVTVKTVNNQTVTVKKDDVQQMNP). Residues 88–774 (YQASDMADMT…ILAKLEDMRD (687 aa)) enclose the Myosin motor domain. 181–188 (GESGAGKT) lines the ATP pocket. Actin-binding regions lie at residues 652 to 674 (LNKL…VPNE) and 753 to 767 (KIGH…GILA). An IQ domain is found at 777–806 (LAKIMTMLQCRLRGFLMRIEFKKMLERRIG). Residues 835 to 1921 (LLNVARQEEE…ALNKLRTRHR (1087 aa)) adopt a coiled-coil conformation. The disordered stretch occupies residues 1116 to 1137 (EELEAERSMRAKVEKQRSDLSR). A compositionally biased stretch (basic and acidic residues) spans 1120–1137 (AERSMRAKVEKQRSDLSR).

This sequence belongs to the TRAFAC class myosin-kinesin ATPase superfamily. Myosin family.

The protein resides in the cytoplasm. It localises to the myofibril. May play a role in masticatory muscles contraction. This chain is Myosin-16, found in Canis lupus familiaris (Dog).